A 347-amino-acid chain; its full sequence is Protein RecA (347 aa).

66 to 73 (GPESSGKT) contacts ATP.

This sequence belongs to the RecA family.

It localises to the cytoplasm. Functionally, can catalyze the hydrolysis of ATP in the presence of single-stranded DNA, the ATP-dependent uptake of single-stranded DNA by duplex DNA, and the ATP-dependent hybridization of homologous single-stranded DNAs. It interacts with LexA causing its activation and leading to its autocatalytic cleavage. The chain is Protein RecA from Allochromatium vinosum (Chromatium vinosum).